Here is a 347-residue protein sequence, read N- to C-terminus: Quinolinate synthase (347 aa).

Positions 47 and 68 each coordinate iminosuccinate. Cys-113 lines the [4Fe-4S] cluster pocket. Residues 139–141 (YAN) and Ser-156 contribute to the iminosuccinate site. Residue Cys-200 participates in [4Fe-4S] cluster binding. Residues 226–228 (HPE) and Thr-243 each bind iminosuccinate. Position 297 (Cys-297) interacts with [4Fe-4S] cluster.

Belongs to the quinolinate synthase family. Type 1 subfamily. Requires [4Fe-4S] cluster as cofactor.

The protein resides in the cytoplasm. The enzyme catalyses iminosuccinate + dihydroxyacetone phosphate = quinolinate + phosphate + 2 H2O + H(+). The protein operates within cofactor biosynthesis; NAD(+) biosynthesis; quinolinate from iminoaspartate: step 1/1. Catalyzes the condensation of iminoaspartate with dihydroxyacetone phosphate to form quinolinate. This is Quinolinate synthase from Salmonella enteritidis PT4 (strain P125109).